Reading from the N-terminus, the 261-residue chain is Cytochrome c oxidase subunit 3 (261 aa).

The Mitochondrial matrix segment spans residues 1 to 15 (MTHQTHAYHMVNPSP). The helical transmembrane segment at 16 to 34 (WPLTGALSALLMTSGLVMW) threads the bilayer. The Mitochondrial intermembrane segment spans residues 35 to 40 (FHYHST). A helical membrane pass occupies residues 41-66 (ILVLLGLLTNILTMYQWWRDVVREGT). Residues 67–72 (FQGHHT) lie on the Mitochondrial matrix side of the membrane. The chain crosses the membrane as a helical span at residues 73-105 (PTVQKGLRYGMVLFIISEVFFFAGFFWAFYHSS). The Mitochondrial intermembrane segment spans residues 106–128 (LAPTPELGGCWPPTGIHPLDPME). A helical membrane pass occupies residues 129–152 (VPLLNTSVLLASGVTITWAHHSLM). The Mitochondrial matrix portion of the chain corresponds to 153 to 155 (EGN). Residues 156 to 183 (RKQMLQALFITISLGIYFTLLQASEYHE) form a helical membrane-spanning segment. Over 184–190 (ASFSISD) the chain is Mitochondrial intermembrane. A helical membrane pass occupies residues 191-223 (GIYGSTFFMATGFHGLHVIIGSTFLAVCFLRQL). Over 224–232 (KFHFTSNHH) the chain is Mitochondrial matrix. A helical membrane pass occupies residues 233–256 (FGFEAAAWYWHFVDVVWLFLYVSI). Topologically, residues 257–261 (YWWGS) are mitochondrial intermembrane.

Belongs to the cytochrome c oxidase subunit 3 family. As to quaternary structure, component of the cytochrome c oxidase (complex IV, CIV), a multisubunit enzyme composed of 14 subunits. The complex is composed of a catalytic core of 3 subunits MT-CO1, MT-CO2 and MT-CO3, encoded in the mitochondrial DNA, and 11 supernumerary subunits COX4I, COX5A, COX5B, COX6A, COX6B, COX6C, COX7A, COX7B, COX7C, COX8 and NDUFA4, which are encoded in the nuclear genome. The complex exists as a monomer or a dimer and forms supercomplexes (SCs) in the inner mitochondrial membrane with NADH-ubiquinone oxidoreductase (complex I, CI) and ubiquinol-cytochrome c oxidoreductase (cytochrome b-c1 complex, complex III, CIII), resulting in different assemblies (supercomplex SCI(1)III(2)IV(1) and megacomplex MCI(2)III(2)IV(2)).

The protein resides in the mitochondrion inner membrane. The enzyme catalyses 4 Fe(II)-[cytochrome c] + O2 + 8 H(+)(in) = 4 Fe(III)-[cytochrome c] + 2 H2O + 4 H(+)(out). Component of the cytochrome c oxidase, the last enzyme in the mitochondrial electron transport chain which drives oxidative phosphorylation. The respiratory chain contains 3 multisubunit complexes succinate dehydrogenase (complex II, CII), ubiquinol-cytochrome c oxidoreductase (cytochrome b-c1 complex, complex III, CIII) and cytochrome c oxidase (complex IV, CIV), that cooperate to transfer electrons derived from NADH and succinate to molecular oxygen, creating an electrochemical gradient over the inner membrane that drives transmembrane transport and the ATP synthase. Cytochrome c oxidase is the component of the respiratory chain that catalyzes the reduction of oxygen to water. Electrons originating from reduced cytochrome c in the intermembrane space (IMS) are transferred via the dinuclear copper A center (CU(A)) of subunit 2 and heme A of subunit 1 to the active site in subunit 1, a binuclear center (BNC) formed by heme A3 and copper B (CU(B)). The BNC reduces molecular oxygen to 2 water molecules using 4 electrons from cytochrome c in the IMS and 4 protons from the mitochondrial matrix. This chain is Cytochrome c oxidase subunit 3 (MT-CO3), found in Dugong dugon (Dugong).